Reading from the N-terminus, the 172-residue chain is Ribosome maturation factor RimM (172 aa).

One can recognise a PRC barrel domain in the interval 96–168 (DGEFYYHEII…RVDVELLEGL (73 aa)).

Belongs to the RimM family. Binds ribosomal protein uS19.

The protein resides in the cytoplasm. Its function is as follows. An accessory protein needed during the final step in the assembly of 30S ribosomal subunit, possibly for assembly of the head region. Essential for efficient processing of 16S rRNA. May be needed both before and after RbfA during the maturation of 16S rRNA. It has affinity for free ribosomal 30S subunits but not for 70S ribosomes. The sequence is that of Ribosome maturation factor RimM from Streptococcus suis (strain 05ZYH33).